A 130-amino-acid polypeptide reads, in one-letter code: Cytidine deaminase (130 aa).

In terms of domain architecture, CMP/dCMP-type deaminase spans 3–130 (VNLEWIIKQL…ELLMNGFKKS (128 aa)). Residue 43 to 45 (NIE) participates in substrate binding. Cysteine 54 is a Zn(2+) binding site. Residue glutamate 56 is the Proton donor of the active site. Positions 88 and 91 each coordinate Zn(2+).

Belongs to the cytidine and deoxycytidylate deaminase family. Homodimer. The cofactor is Zn(2+).

The enzyme catalyses cytidine + H2O + H(+) = uridine + NH4(+). It catalyses the reaction 2'-deoxycytidine + H2O + H(+) = 2'-deoxyuridine + NH4(+). Its function is as follows. This enzyme scavenges exogenous and endogenous cytidine and 2'-deoxycytidine for UMP synthesis. In Mycoplasma genitalium (strain ATCC 33530 / DSM 19775 / NCTC 10195 / G37) (Mycoplasmoides genitalium), this protein is Cytidine deaminase (cdd).